The following is a 189-amino-acid chain: 3-isopropylmalate dehydratase small subunit (189 aa).

Belongs to the LeuD family. LeuD type 1 subfamily. As to quaternary structure, heterodimer of LeuC and LeuD.

The enzyme catalyses (2R,3S)-3-isopropylmalate = (2S)-2-isopropylmalate. It participates in amino-acid biosynthesis; L-leucine biosynthesis; L-leucine from 3-methyl-2-oxobutanoate: step 2/4. Its function is as follows. Catalyzes the isomerization between 2-isopropylmalate and 3-isopropylmalate, via the formation of 2-isopropylmaleate. This is 3-isopropylmalate dehydratase small subunit from Francisella philomiragia subsp. philomiragia (strain ATCC 25017 / CCUG 19701 / FSC 153 / O#319-036).